A 341-amino-acid polypeptide reads, in one-letter code: Protein MENT (341 aa).

The first 23 residues, 1-23 (MVPAAGALLWVLLLNLGPRAAGA), serve as a signal peptide directing secretion. A disordered region spans residues 115–196 (AGKDSTSREL…SPSPTAMPSP (82 aa)). A compositionally biased stretch (polar residues) spans 127-155 (ATPNTAGSSSTRFIANSQEPEIRLTSSLP).

Phosphorylation sites are present in the extracellular medium. Plasma. Overexpressed in lymphomas.

The protein localises to the secreted. Functionally, involved in control of cellular proliferation. Onconcogenic modifier contributing to the tumor suppressor function of DNMT3B. This chain is Protein MENT (MENT), found in Homo sapiens (Human).